Consider the following 287-residue polypeptide: Bifunctional protein FolD (287 aa).

Residues 166–168 and Ile232 each bind NADP(+); that span reads GAS.

It belongs to the tetrahydrofolate dehydrogenase/cyclohydrolase family. As to quaternary structure, homodimer.

The catalysed reaction is (6R)-5,10-methylene-5,6,7,8-tetrahydrofolate + NADP(+) = (6R)-5,10-methenyltetrahydrofolate + NADPH. It catalyses the reaction (6R)-5,10-methenyltetrahydrofolate + H2O = (6R)-10-formyltetrahydrofolate + H(+). It participates in one-carbon metabolism; tetrahydrofolate interconversion. Catalyzes the oxidation of 5,10-methylenetetrahydrofolate to 5,10-methenyltetrahydrofolate and then the hydrolysis of 5,10-methenyltetrahydrofolate to 10-formyltetrahydrofolate. The protein is Bifunctional protein FolD of Aeromonas hydrophila subsp. hydrophila (strain ATCC 7966 / DSM 30187 / BCRC 13018 / CCUG 14551 / JCM 1027 / KCTC 2358 / NCIMB 9240 / NCTC 8049).